A 371-amino-acid polypeptide reads, in one-letter code: tRNA-specific 2-thiouridylase MnmA (371 aa).

ATP-binding positions include 16–23 (GMSGGVDS) and Met-42. Residues 102 to 104 (NPD) are interaction with target base in tRNA. The active-site Nucleophile is Cys-107. An intrachain disulfide couples Cys-107 to Cys-204. Gly-132 serves as a coordination point for ATP. Positions 154–156 (KDQ) are interaction with tRNA. The active-site Cysteine persulfide intermediate is the Cys-204. The tract at residues 316–317 (RY) is interaction with tRNA.

It belongs to the MnmA/TRMU family.

Its subcellular location is the cytoplasm. The enzyme catalyses S-sulfanyl-L-cysteinyl-[protein] + uridine(34) in tRNA + AH2 + ATP = 2-thiouridine(34) in tRNA + L-cysteinyl-[protein] + A + AMP + diphosphate + H(+). In terms of biological role, catalyzes the 2-thiolation of uridine at the wobble position (U34) of tRNA, leading to the formation of s(2)U34. The polypeptide is tRNA-specific 2-thiouridylase MnmA (Shewanella halifaxensis (strain HAW-EB4)).